A 534-amino-acid polypeptide reads, in one-letter code: Ankyrin repeat and LEM domain-containing protein 1 (534 aa).

4 ANK repeats span residues 4–35 (TACLALRLLAALREEEARAVEELLRLGADPNL), 39–71 (DGAAAVHLAARASHPRALHCLRMLLRWGADPNA), 75–104 (EGLTPVHVAAAWGCCGALELLLSRGGDPTL), and 108–137 (DGLRPLDWALQQRHHNCARVLQELDTPTQP). The LEM domain occupies 279 to 323 (HSSVPPMSDLQLLQALRALGYSPGPVTPFTRGHYLRRLQEAQASR). Positions 370-485 (KSSFTYLLLD…ALGLQTLTNQ (116 aa)) constitute a GIY-YIG domain. Positions 498-505 (PPSRRRRL) match the Nuclear localization signal motif.

As to quaternary structure, interacts (via LEM domain) with BANF1; the interaction may favor BANF1 dimerization. In terms of tissue distribution, predominantly expressed in bone marrow, spleen, thymus, colon and ovary. Expressed also to a lesser extent in lymph nodes, liver and testis.

Its subcellular location is the cytoplasm. The protein resides in the nucleus. In terms of biological role, endonuclease that probably plays a role in the DNA damage response and DNA repair. The sequence is that of Ankyrin repeat and LEM domain-containing protein 1 from Mus musculus (Mouse).